Here is a 65-residue protein sequence, read N- to C-terminus: Large ribosomal subunit protein uL29 (65 aa).

Belongs to the universal ribosomal protein uL29 family.

This chain is Large ribosomal subunit protein uL29, found in Acidithiobacillus ferrooxidans (strain ATCC 23270 / DSM 14882 / CIP 104768 / NCIMB 8455) (Ferrobacillus ferrooxidans (strain ATCC 23270)).